The following is a 432-amino-acid chain: 3-phosphoshikimate 1-carboxyvinyltransferase (432 aa).

3-phosphoshikimate is bound by residues Lys22, Ser23, and Arg27. Lys22 contributes to the phosphoenolpyruvate binding site. 2 residues coordinate phosphoenolpyruvate: Gly96 and Arg127. 7 residues coordinate 3-phosphoshikimate: Ser173, Ser174, Gln175, Ser201, Asp316, Asn339, and Lys343. Gln175 lines the phosphoenolpyruvate pocket. The active-site Proton acceptor is the Asp316. The phosphoenolpyruvate site is built by Arg347, Arg391, and Lys416.

Belongs to the EPSP synthase family. Monomer.

Its subcellular location is the cytoplasm. It carries out the reaction 3-phosphoshikimate + phosphoenolpyruvate = 5-O-(1-carboxyvinyl)-3-phosphoshikimate + phosphate. It participates in metabolic intermediate biosynthesis; chorismate biosynthesis; chorismate from D-erythrose 4-phosphate and phosphoenolpyruvate: step 6/7. Catalyzes the transfer of the enolpyruvyl moiety of phosphoenolpyruvate (PEP) to the 5-hydroxyl of shikimate-3-phosphate (S3P) to produce enolpyruvyl shikimate-3-phosphate and inorganic phosphate. The protein is 3-phosphoshikimate 1-carboxyvinyltransferase of Histophilus somni (Haemophilus somnus).